Consider the following 46-residue polypeptide: Protein PsbN (46 aa).

A helical transmembrane segment spans residues leucine 10 to phenylalanine 30.

It belongs to the PsbN family.

The protein localises to the cellular thylakoid membrane. Its function is as follows. May play a role in photosystem I and II biogenesis. This chain is Protein PsbN, found in Prochlorococcus marinus (strain MIT 9211).